A 219-amino-acid polypeptide reads, in one-letter code: Orotate phosphoribosyltransferase (219 aa).

Lys26 is a 5-phospho-alpha-D-ribose 1-diphosphate binding site. Residue 34–35 (FF) coordinates orotate. Residues 72–73 (YK), Arg98, Lys99, Lys102, His104, and 124–132 (DDVITAGTA) contribute to the 5-phospho-alpha-D-ribose 1-diphosphate site. Thr128 and Arg156 together coordinate orotate.

It belongs to the purine/pyrimidine phosphoribosyltransferase family. PyrE subfamily. In terms of assembly, homodimer. Requires Mg(2+) as cofactor.

The catalysed reaction is orotidine 5'-phosphate + diphosphate = orotate + 5-phospho-alpha-D-ribose 1-diphosphate. It participates in pyrimidine metabolism; UMP biosynthesis via de novo pathway; UMP from orotate: step 1/2. Its function is as follows. Catalyzes the transfer of a ribosyl phosphate group from 5-phosphoribose 1-diphosphate to orotate, leading to the formation of orotidine monophosphate (OMP). This is Orotate phosphoribosyltransferase from Stenotrophomonas maltophilia (strain K279a).